The following is a 416-amino-acid chain: Transcription factor LATE FLOWERING (416 aa).

Composition is skewed to low complexity over residues 176–186 and 200–212; these read STTTTTTALPP and TSPTTKTTTTSET. Disordered regions lie at residues 176–226 and 276–311; these read STTT…AGGS and LGGPASASDPSSRPPPPPQRPRRKNVRISSDPQTVA. The segment at 303–316 is basic motif; degenerate; that stretch reads ISSDPQTVAARLRR. The bHLH domain maps to 303 to 352; that stretch reads ISSDPQTVAARLRRERVSERLRVLQRLVPGGSKMDTATMLDEAASYLKFL. The interval 317 to 352 is helix-loop-helix motif; the sequence is ERVSERLRVLQRLVPGGSKMDTATMLDEAASYLKFL.

The protein belongs to the bHLH protein family. Interacts with PIL13 and PIL15.

The protein localises to the nucleus. Transcription factor involved in the negative regulation of flowering. May be involved in the repression of the flowering factor GI and HD1 by interacting with PIL13 and PIL15 and competing with PRR1. Possesses transactivation activity in yeast. The sequence is that of Transcription factor LATE FLOWERING from Oryza sativa subsp. japonica (Rice).